The primary structure comprises 429 residues: O-methyltransferase phnC (429 aa).

Asp-285 serves as a coordination point for S-adenosyl-L-methionine.

The protein belongs to the class I-like SAM-binding methyltransferase superfamily. Cation-independent O-methyltransferase family. COMT subfamily.

It carries out the reaction (2'R)-atrovenetin + S-adenosyl-L-methionine = deoxyherqueinone + S-adenosyl-L-homocysteine + H(+). Its pathway is secondary metabolite biosynthesis. Its function is as follows. O-methyltransferase; part of the gene cluster that mediates the biosynthesis of phenalenones such as herqueinone, compounds that have been reported to treat tumors, bacterial infections and/or mycoses, and rheumatic diseases. The non-reducing polyketide synthase phnA synthesizes the heptaketide backbone and cyclizes it into the angular, hemiketal-containing naphtho-gamma-pyrone prephenalenone. The product template (PT) domain of phnA catalyzes only the C4-C9 aldol condensation, which is unprecedented among known PT domains. The transformation of prephenalenone to phenalenones requires an FAD-dependent monooxygenase phnB, which catalyzes the C2 aromatic hydroxylation of prephenalenone and ring opening of the gamma-pyrone ring simultaneously. Subsequent intramolecular deprotonation of C3 phenolic oxygen accelerates phenalenone ring closure to yield the tricyclic phenalenone core with a C2 hydroxylation. The prenyltransferase phnF further catalyzes reverse C-prenylation of phenalenone by direct electrophilic substitution at C6, or possibly via first a forward O-prenylation of a neighboring phenol in phenalenone, followed by a Claisen rearrangement. The hydroalkoxylation enzyme phnH catalyzes the 5-exo-trig cyclization via acid catalysis after the spontaneous deprotonation of 7-OH, which leads to the formation of the dihydrobenzofuran atrovenetin. Atrovenetin is further converted to deoxyherqueinone by the O-methyltransferase phnC which can methylate C2-OH to stabilize the northern portion of the phenalenone core. Finally, the oxidoreductase phnG converts deoxyherqueinone to herqueinone via C6 hydroxylation. The chain is O-methyltransferase phnC from Penicillium herquei.